We begin with the raw amino-acid sequence, 757 residues long: Polyribonucleotide nucleotidyltransferase (757 aa).

Aspartate 487 and aspartate 493 together coordinate Mg(2+). The KH domain maps to 554–613 (PRITTVRVKPDQIRLIIGPGGKTIKGIVDQTGVAIDVEDDGTVNVASADSDAVKRALDII). In terms of domain architecture, S1 motif spans 623–691 (GATYKGTVKR…REGKIRLSRR (69 aa)). The interval 697–757 (PEGEEGDRAR…PPRERRERRS (61 aa)) is disordered. Basic and acidic residues-rich tracts occupy residues 702 to 711 (GDRARERMAQ) and 719 to 757 (PRRDGPGGRGGDRGGDRGSRPGLDRDRGGPPRERRERRS).

The protein belongs to the polyribonucleotide nucleotidyltransferase family. Mg(2+) serves as cofactor.

It is found in the cytoplasm. The catalysed reaction is RNA(n+1) + phosphate = RNA(n) + a ribonucleoside 5'-diphosphate. In terms of biological role, involved in mRNA degradation. Catalyzes the phosphorolysis of single-stranded polyribonucleotides processively in the 3'- to 5'-direction. This chain is Polyribonucleotide nucleotidyltransferase, found in Sorangium cellulosum (strain So ce56) (Polyangium cellulosum (strain So ce56)).